Reading from the N-terminus, the 131-residue chain is Ribonuclease P protein component (131 aa).

It belongs to the RnpA family. In terms of assembly, consists of a catalytic RNA component (M1 or rnpB) and a protein subunit.

The catalysed reaction is Endonucleolytic cleavage of RNA, removing 5'-extranucleotides from tRNA precursor.. Functionally, RNaseP catalyzes the removal of the 5'-leader sequence from pre-tRNA to produce the mature 5'-terminus. It can also cleave other RNA substrates such as 4.5S RNA. The protein component plays an auxiliary but essential role in vivo by binding to the 5'-leader sequence and broadening the substrate specificity of the ribozyme. The sequence is that of Ribonuclease P protein component from Stutzerimonas stutzeri (strain A1501) (Pseudomonas stutzeri).